The chain runs to 327 residues: MESKETVRIGGRRSKLAVVQSEQVKVMIESKFSHIECPLLSVHTLGDQVQSKPLYSFGGKAVWTKELEDLLYKDDESRIDLIVHSLKDMPTLLPDGFELGGITKRVDPTDALVMPIGSPYSSLSELPDGSVVGTSSVRRSAQLKRKFPNLKFESIRGNIQTRLAKLDDPETPYKCIVLASAGLMRSGLDSRITQRFNADTMCYAVGQGALGIEIRKDDEKMKKILKEICDPSTTICCLAERSLLRTLEGGCSVPIGVVSNYDESTKVLTLKGIVINVEGTEWVEIEHKVTISNEREDSINCGKELAAKLTQNGAKEILDSINLDKIT.

At C251 the chain carries S-(dipyrrolylmethanemethyl)cysteine.

It belongs to the HMBS family. Dipyrromethane serves as cofactor.

The catalysed reaction is 4 porphobilinogen + H2O = hydroxymethylbilane + 4 NH4(+). It functions in the pathway porphyrin-containing compound metabolism; protoporphyrin-IX biosynthesis; coproporphyrinogen-III from 5-aminolevulinate: step 2/4. In terms of biological role, tetrapolymerization of the monopyrrole PBG into the hydroxymethylbilane pre-uroporphyrinogen in several discrete steps. The chain is Porphobilinogen deaminase (HEM3) from Kluyveromyces lactis (strain ATCC 8585 / CBS 2359 / DSM 70799 / NBRC 1267 / NRRL Y-1140 / WM37) (Yeast).